The chain runs to 89 residues: Late cornified envelope protein 3A (89 aa).

2 stretches are compositionally biased toward low complexity: residues 1 to 10 (MSCQQNQQQC) and 17 to 46 (PAKS…SERS). Disordered regions lie at residues 1–46 (MSCQ…SERS) and 62–89 (CQSS…AGCC).

It belongs to the LCE family. As to quaternary structure, interacts with CYSRT1; the interaction is direct. Skin-specific. Expression was readily detected in adult trunk skin, adult arm skin, fetal skin, penal skin, vulva, esophagus and tongue. Not expressed in the cervix, rectum, lung, colon, or placenta.

Its function is as follows. A structural component of the cornified envelope of the stratum corneum involved in innate cutaneous host defense. Possesses defensin-like antimicrobial activity against a broad spectrum of Gram-positive and Gram-negative bacteria, both aerobic and anaerobic species. Upon inflammation, may regulate skin barrier repair by shaping cutaneous microbiota composition and immune response to bacterial antigens. The protein is Late cornified envelope protein 3A of Homo sapiens (Human).